Reading from the N-terminus, the 589-residue chain is Protein FAM117B (589 aa).

The interval 1-310 (MSQRVRRNGS…RDKERQSPFH (310 aa)) is disordered. Ser10 bears the Phosphoserine mark. Residues 16–29 (SLGGGAVATAGGPG) show a composition bias toward gly residues. Residues 45–56 (QQQQQQHGSPTR) show a composition bias toward low complexity. The segment covering 57–85 (SGGGGGGNNNGGCCGGASGPAGGGGGGGP) has biased composition (gly residues). Position 106 is a phosphoserine (Ser106). A compositionally biased stretch (low complexity) spans 108–136 (TVATQTGASATSTRGTSPTRSAAPGARGS). Residues 137 to 146 (PPRPPPPPPL) are compositionally biased toward pro residues. 2 stretches are compositionally biased toward low complexity: residues 147–158 (LGTVSSPSSSPT) and 207–220 (PSSSPSSIIRRTSS). Residues Ser210, Ser219, Ser220, and Ser273 each carry the phosphoserine modification. The segment covering 292 to 302 (RSKHSSRHHRD) has biased composition (basic residues). Phosphoserine is present on residues Ser345 and Ser391. Disordered regions lie at residues 370 to 464 (QDIP…NNSY) and 556 to 589 (STNTEQDRVSRGTSTVMPSASLLPPPEPIEEAEG). Residues 384–397 (QRSSSTRSIDTQTP) show a composition bias toward polar residues. The segment covering 404–417 (SNNSSRSQSVSPTS) has biased composition (low complexity). A phosphoserine mark is found at Ser449 and Ser457.

The chain is Protein FAM117B (FAM117B) from Homo sapiens (Human).